The sequence spans 204 residues: Holliday junction branch migration complex subunit RuvA (204 aa).

The interval 1–67 (MIAFLSGHLV…ETELVLYGFG (67 aa)) is domain I. A domain II region spans residues 68–146 (SPAERDVFVE…HWRQGLENAD (79 aa)). Residues 147-156 (RPLAGGPPPA) are flexible linker. The tract at residues 156 to 204 (AIREEVEMALLALGYSLQEIQAALQALPSQPRPTEEWLRDAITYLSRQP) is domain III.

Belongs to the RuvA family. As to quaternary structure, homotetramer. Forms an RuvA(8)-RuvB(12)-Holliday junction (HJ) complex. HJ DNA is sandwiched between 2 RuvA tetramers; dsDNA enters through RuvA and exits via RuvB. An RuvB hexamer assembles on each DNA strand where it exits the tetramer. Each RuvB hexamer is contacted by two RuvA subunits (via domain III) on 2 adjacent RuvB subunits; this complex drives branch migration. In the full resolvosome a probable DNA-RuvA(4)-RuvB(12)-RuvC(2) complex forms which resolves the HJ.

Its subcellular location is the cytoplasm. The RuvA-RuvB-RuvC complex processes Holliday junction (HJ) DNA during genetic recombination and DNA repair, while the RuvA-RuvB complex plays an important role in the rescue of blocked DNA replication forks via replication fork reversal (RFR). RuvA specifically binds to HJ cruciform DNA, conferring on it an open structure. The RuvB hexamer acts as an ATP-dependent pump, pulling dsDNA into and through the RuvAB complex. HJ branch migration allows RuvC to scan DNA until it finds its consensus sequence, where it cleaves and resolves the cruciform DNA. This chain is Holliday junction branch migration complex subunit RuvA, found in Synechococcus sp. (strain JA-3-3Ab) (Cyanobacteria bacterium Yellowstone A-Prime).